A 365-amino-acid polypeptide reads, in one-letter code: MDSPDSVRVKCESKGSCSPEEGLNNGLPEEHNQASGGRRRKRPVQRGKPPYSYIALIAMAIANSPERKLTLGGIYKFIMERFPFYRENSKKWQNSIRHNLTLNDCFVKIPREPGHPGKGNYWTLDPAAEDMFDNGSFLRRRKRFKRTDITTYPGYMQNSSAFTPTPTGRASYPNSIYSSVGSGYNPQIHQTHHPAVVHQYYQSPGEAGQGQHRMFSIDSLINQQSLMQPSPGAELTHHSLGLNGNLGNMTNSCSVGDLSCFQTQSISPTGVGSLLNRSSNAVSSNLTYSYSSSPPHLPVPPASYSPNNSQLYGSTSRLAMRSGPCVDHTDQLLSLPGTQINGVCQYNNSSYMRQTHFASGLERYM.

The span at 1 to 13 (MDSPDSVRVKCES) shows a compositional bias: basic and acidic residues. The segment at 1-46 (MDSPDSVRVKCESKGSCSPEEGLNNGLPEEHNQASGGRRRKRPVQR) is disordered. Residues 48-142 (KPPYSYIALI…DNGSFLRRRK (95 aa)) constitute a DNA-binding region (fork-head).

As to expression, first expressed at the end of gastrulation (stage 13) in the anterior ectodermal placode. During intermediate neural plate stages (stages 14-16), expression expands to the presumptive nasal ectoderm (PNE) and the presumptive lens ectoderm (PLE). By stages 18-21, expression begins to deplete in the PNE, while intensifying in the PLE so that by late neural stages (stages 22), expression is restricted to the PLE. Throughout tailbud stages (stage 23-31), expression is maintained in the lens placode and lens vesicle. In the maturing lens (stage 32-onwards), expression is restricted to the anterior lens epithelium, where it remains during the tadpole stage. In tadpoles there is additional expression in the ventral midline of the pharynx. Expression continues in the adult eye.

Its subcellular location is the nucleus. Probable transcription factor. Mediates lens formation in the embryo by promoting the proliferation of the specified lens ectoderm and suppressing its terminal differentiation. The sequence is that of Forkhead box protein E4 from Xenopus laevis (African clawed frog).